The sequence spans 88 residues: Large ribosomal subunit protein bL27 (88 aa).

A disordered region spans residues 1–23 (MAHKKGTGSTRNGRDSNSKRLGV).

The protein belongs to the bacterial ribosomal protein bL27 family.

The protein is Large ribosomal subunit protein bL27 of Synechococcus sp. (strain CC9902).